The following is a 242-amino-acid chain: Eukaryotic translation initiation factor 3 subunit J (242 aa).

Residues 1–10 are compositionally biased toward acidic residues; it reads MASWDDEDFE. 3 disordered regions span residues 1–58, 71–97, and 201–242; these read MASW…KAQR, MKLKPEDASTKRDRQRQAELDSDMMNA, and REEK…DDFM. Residues 11 to 21 are compositionally biased toward low complexity; it reads VPAAATPAVPA. The span at 23–38 shows a compositional bias: acidic residues; that stretch reads WDDDEEEDVMDSWDAE. Residues 71-89 show a composition bias toward basic and acidic residues; it reads MKLKPEDASTKRDRQRQAE.

This sequence belongs to the eIF-3 subunit J family. In terms of assembly, component of the eukaryotic translation initiation factor 3 (eIF-3) complex.

It is found in the cytoplasm. In terms of biological role, component of the eukaryotic translation initiation factor 3 (eIF-3) complex, which is involved in protein synthesis of a specialized repertoire of mRNAs and, together with other initiation factors, stimulates binding of mRNA and methionyl-tRNAi to the 40S ribosome. The eIF-3 complex specifically targets and initiates translation of a subset of mRNAs involved in cell proliferation. This Yarrowia lipolytica (strain CLIB 122 / E 150) (Yeast) protein is Eukaryotic translation initiation factor 3 subunit J.